Consider the following 290-residue polypeptide: MQLLDGKITSDQIKEELKTKVEAIKAKGGKIPHLAAVLVGDSGAAVTYVNAKVKACELVGFKSTLVKLPETITEADLLAKVAEINADKDIDGYIVQLPLPKHIDEQKVTEAISPDKDVDGFHPTSLGRMVLNLPTYLPATPYGIMQLLERNGIETSGKHCVVMGRSHIVGSPMSILMARNTNPGNATVTMVHSRTKNLKELTLQADILIVAIGKPEFVTADMVKEGAVVVDVGIHRIDDATKKSGFRLLGDVKFDEVAPKTSYISPVPGGVGPMTIASLLMNTLQAAALK.

NADP(+)-binding positions include 164–166 (GRS), Ser193, and Ile234.

The protein belongs to the tetrahydrofolate dehydrogenase/cyclohydrolase family. Homodimer.

The enzyme catalyses (6R)-5,10-methylene-5,6,7,8-tetrahydrofolate + NADP(+) = (6R)-5,10-methenyltetrahydrofolate + NADPH. It carries out the reaction (6R)-5,10-methenyltetrahydrofolate + H2O = (6R)-10-formyltetrahydrofolate + H(+). It functions in the pathway one-carbon metabolism; tetrahydrofolate interconversion. Its function is as follows. Catalyzes the oxidation of 5,10-methylenetetrahydrofolate to 5,10-methenyltetrahydrofolate and then the hydrolysis of 5,10-methenyltetrahydrofolate to 10-formyltetrahydrofolate. The sequence is that of Bifunctional protein FolD from Cytophaga hutchinsonii (strain ATCC 33406 / DSM 1761 / CIP 103989 / NBRC 15051 / NCIMB 9469 / D465).